The following is a 279-amino-acid chain: MGSQQVAISFLTNLAKAAFGLGVAATALNSSLYTVDGGERAVLFDRFRGVLDQTVGEGTHFLIPYLQTPHIYDIRTKPHTFSSKSGTKDLQMVNLTLRVLFRPEVSRLPYIFQTLGLEYDEKVLPSIGNEVLKAVVANFNADQLLTERPQVSALVRDALIKRAREFNIELDDIAITHLSYGAEFSRAVEAKQVAQQEAERSKFVVMKADQERRAAVIRAEGESEAAQLISDATAKAGMGLIELRRIEASREVAATLARSPNVAYLPGGQSMLFNLNPGR.

Gly-2 carries the post-translational modification N-acetylglycine. Residues 2-6 (GSQQV) lie on the Mitochondrial matrix side of the membrane. A helical; Signal-anchor for type II membrane protein transmembrane segment spans residues 7 to 28 (AISFLTNLAKAAFGLGVAATAL). The Mitochondrial intermembrane segment spans residues 29–279 (NSSLYTVDGG…SMLFNLNPGR (251 aa)).

Belongs to the prohibitin family. As to quaternary structure, component of a prohibitin multimeric complex in mitochondrial membranes. In terms of tissue distribution, mostly expressed in proliferative tissues, including vasculature, shoot and root apical tissues. Accumulates in dry seeds.

It is found in the mitochondrion inner membrane. Prohibitin probably acts as a holdase/unfoldase for the stabilization of newly synthesized mitochondrial proteins. This is Prohibitin-4, mitochondrial (PHB4) from Arabidopsis thaliana (Mouse-ear cress).